Reading from the N-terminus, the 482-residue chain is U2 small nuclear ribonucleoprotein auxiliary factor 35 kDa subunit-related protein 2 (482 aa).

The tract at residues 1-59 (MAAPEKMTFPEKPSHKKYRAALKKEKRKKRRQELARLRDSGLSQKEEEEDTFIEEQQLE) is disordered. Residues 14–31 (SHKKYRAALKKEKRKKRR) are compositionally biased toward basic residues. A Glycyl lysine isopeptide (Lys-Gly) (interchain with G-Cter in SUMO2) cross-link involves residue Lys-45. The segment covering 46 to 58 (EEEEDTFIEEQQL) has biased composition (acidic residues). Lys-62 participates in a covalent cross-link: Glycyl lysine isopeptide (Lys-Gly) (interchain with G-Cter in SUMO2). Positions 115–135 (QRKEREEEEQKRQEKKEKEEA) are disordered. Residues 166 to 194 (EKDRANCPFYSKTGACRFGDRCSRKHNFP) form a C3H1-type 1 zinc finger. Residues 198–304 (PTLLIKSMFT…RQLQCEFCPV (107 aa)) form the RRM domain. The C3H1-type 2 zinc-finger motif lies at 306–333 (RWKMAICGLFEIQQCPRGKHCNFLHVFR). Ser-349 carries the phosphoserine modification. Residues 351–482 (DRTGSSFGKN…DRTVQSPKSK (132 aa)) form a disordered region. 2 stretches are compositionally biased toward basic and acidic residues: residues 360–375 (NSER…DYYS) and 383–398 (PSPD…SERK). Ser-384 is subject to Phosphoserine. Residues 399 to 412 (SSRHRGKKSHKRTS) show a composition bias toward basic residues. The span at 413–435 (KSRERHNSRSRGRNRDRSRDRSR) shows a compositional bias: basic and acidic residues. Residues 436–454 (GRGSRSRSRSRSRRSRRSR) are compositionally biased toward basic residues.

As to quaternary structure, component of the U11/U12 snRNPs that are part of the U12-type spliceosome. Interacts (via RS domain) with SRSF1 and SRSF2. Interacts with U2AF2/U2AF65. Post-translationally, phosphorylated in the RS domain by SRPK1. Widely expressed.

It localises to the nucleus. Functionally, pre-mRNA-binding protein required for splicing of both U2- and U12-type introns. Selectively interacts with the 3'-splice site of U2- and U12-type pre-mRNAs and promotes different steps in U2 and U12 intron splicing. Recruited to U12 pre-mRNAs in an ATP-dependent manner and is required for assembly of the pre-spliceosome, a precursor to other spliceosomal complexes. For U2-type introns, it is selectively and specifically required for the second step of splicing. This Homo sapiens (Human) protein is U2 small nuclear ribonucleoprotein auxiliary factor 35 kDa subunit-related protein 2 (ZRSR2).